Reading from the N-terminus, the 397-residue chain is Protein PEP-RELATED DEVELOPMENT ARRESTED 1, chloroplastic (397 aa).

Residues 1 to 52 (MLQSIHLRFSSTPSPSKRESLIIPSVICSFPFTSSSFRPKQTQKLKRLVQFC) constitute a chloroplast transit peptide. A compositionally biased stretch (basic and acidic residues) spans 315 to 334 (KDEGADNLSKEDDSSTEGRK). Residues 315 to 351 (KDEGADNLSKEDDSSTEGRKPSGLNGRGSVTGRKPLP) are disordered.

Interacts with FSD2 and MRL7. Highly expressed in young leaves, shoots and flowers. Expressed at low levels in stems and siliques.

It is found in the plastid. Its subcellular location is the chloroplast stroma. It localises to the chloroplast nucleoid. In terms of biological role, plays an essential role in early steps of chloroplast development. May be involved in the redox control of plastid gene expression by maintening the redox state around chloroplast nucleoids. May positively regulate plastid-encoded RNA polymerase (PEP) activity, through binding to FSD2. The chain is Protein PEP-RELATED DEVELOPMENT ARRESTED 1, chloroplastic (PRDA1) from Arabidopsis thaliana (Mouse-ear cress).